The primary structure comprises 1217 residues: ATP-dependent helicase/nuclease subunit A (1217 aa).

Residues 10–475 (VIWTDAQWQS…IDLSQNFRSR (466 aa)) enclose the UvrD-like helicase ATP-binding domain. 31–38 (AAAGSGKT) is an ATP binding site. A UvrD-like helicase C-terminal domain is found at 476–786 (KEVLSTTNYI…RMMTIHSSKG (311 aa)).

Belongs to the helicase family. AddA subfamily. As to quaternary structure, heterodimer of AddA and AddB/RexB. It depends on Mg(2+) as a cofactor.

It carries out the reaction Couples ATP hydrolysis with the unwinding of duplex DNA by translocating in the 3'-5' direction.. The catalysed reaction is ATP + H2O = ADP + phosphate + H(+). The heterodimer acts as both an ATP-dependent DNA helicase and an ATP-dependent, dual-direction single-stranded exonuclease. Recognizes the chi site generating a DNA molecule suitable for the initiation of homologous recombination. The AddA nuclease domain is required for chi fragment generation; this subunit has the helicase and 3' -&gt; 5' nuclease activities. The sequence is that of ATP-dependent helicase/nuclease subunit A from Staphylococcus aureus (strain MSSA476).